The primary structure comprises 278 residues: Dermonecrotic toxin LbSicTox-betaIA1a (278 aa).

Residue histidine 12 is part of the active site. Mg(2+)-binding residues include glutamate 32 and aspartate 34. Residue histidine 48 is the Nucleophile of the active site. 2 cysteine pairs are disulfide-bonded: cysteine 52–cysteine 58 and cysteine 54–cysteine 197. Aspartate 92 is a Mg(2+) binding site. Asparagine 258 carries N-linked (GlcNAc...) asparagine glycosylation.

It belongs to the arthropod phospholipase D family. Class II subfamily. Class IIb sub-subfamily. In terms of tissue distribution, expressed by the venom gland.

Its subcellular location is the secreted. The enzyme catalyses an N-(acyl)-sphingosylphosphoethanolamine = an N-(acyl)-sphingosyl-1,3-cyclic phosphate + ethanolamine. The catalysed reaction is a 1-acyl-sn-glycero-3-phosphocholine = a 1-acyl-sn-glycero-2,3-cyclic phosphate + choline. It catalyses the reaction a 1-acyl-sn-glycero-3-phosphoethanolamine = a 1-acyl-sn-glycero-2,3-cyclic phosphate + ethanolamine. This toxin does not show activity on sphingomyelin (SM) and does not show dermonecrotic activities. This toxin is a member of dermonecrotic toxins that cleave the phosphodiester linkage between the phosphate and headgroup of certain phospholipids (sphingolipid and lysolipid substrates), forming an alcohol (often choline) and a cyclic phosphate. It may act on ceramide phosphoethanolamine (CPE), lysophosphatidylcholine (LPC) and lysophosphatidylethanolamine (LPE), but not on lysophosphatidylserine (LPS), and lysophosphatidylglycerol (LPG). It may act by transphosphatidylation, releasing exclusively cyclic phosphate products as second products. The chain is Dermonecrotic toxin LbSicTox-betaIA1a from Loxosceles boneti (North American fiddleback spider).